A 271-amino-acid polypeptide reads, in one-letter code: tRNA (guanine-N(1)-)-methyltransferase (271 aa).

Residues Gly-120 and 145 to 150 (IGDYVL) each bind S-adenosyl-L-methionine.

The protein belongs to the RNA methyltransferase TrmD family. Homodimer.

It is found in the cytoplasm. The enzyme catalyses guanosine(37) in tRNA + S-adenosyl-L-methionine = N(1)-methylguanosine(37) in tRNA + S-adenosyl-L-homocysteine + H(+). Functionally, specifically methylates guanosine-37 in various tRNAs. The sequence is that of tRNA (guanine-N(1)-)-methyltransferase from Bifidobacterium longum subsp. infantis (strain ATCC 15697 / DSM 20088 / JCM 1222 / NCTC 11817 / S12).